We begin with the raw amino-acid sequence, 51 residues long: Large ribosomal subunit protein eL39 (51 aa).

A compositionally biased stretch (basic residues) spans 1–15 (MAAKKSFKIKQKLAK). Residues 1–21 (MAAKKSFKIKQKLAKAKNQNR) form a disordered region.

The protein belongs to the eukaryotic ribosomal protein eL39 family. In terms of assembly, interacts with YIH1.

This Eremothecium gossypii (strain ATCC 10895 / CBS 109.51 / FGSC 9923 / NRRL Y-1056) (Yeast) protein is Large ribosomal subunit protein eL39 (RPL39).